A 945-amino-acid chain; its full sequence is Probable inorganic carbon transporter subunit DabA (945 aa).

Zn(2+) contacts are provided by C408, D410, H651, and C666.

It belongs to the inorganic carbon transporter (TC 9.A.2) DabA family. Forms a complex with DabB. Requires Zn(2+) as cofactor.

The protein resides in the cell inner membrane. In terms of biological role, part of an energy-coupled inorganic carbon pump. In Sulfurihydrogenibium azorense (strain DSM 15241 / OCM 825 / Az-Fu1), this protein is Probable inorganic carbon transporter subunit DabA.